The chain runs to 513 residues: Sugar transport protein MST8 (513 aa).

At 1–17 (MAGGAMTDTDGAHKNYP) the chain is on the cytoplasmic side. A helical membrane pass occupies residues 18 to 38 (GKMTIFVFLACLVASSGGLIF). Residues 39–81 (GYDIGISGGVTSMDSFLIKFFPSVYAKEKEMVETNQYCKFDSE) lie on the Extracellular side of the membrane. A helical membrane pass occupies residues 82–102 (LLTLFTSSLYLAALIASLFAS). Over 103-116 (VITRKFGRRITMLG) the chain is Cytoplasmic. A helical transmembrane segment spans residues 117–137 (GGVIFLVGAILNGAAADVAML). Residues 138–139 (II) are Extracellular-facing. Residues 140–160 (GRILLGIGVGFSNQAVPLYLS) traverse the membrane as a helical segment. Over 161-166 (EMAPAR) the chain is Cytoplasmic. The helical transmembrane segment at 167–187 (MRGMLNISFQLMITVGILAAN) threads the bilayer. At 188-201 (LINYFTDKIAGGWG) the chain is on the extracellular side. Residues 202 to 222 (WRVSLGLAAVPAVIMAGGSLF) traverse the membrane as a helical segment. At 223–294 (LPDTPNSLLS…LVMSVLIPTL (72 aa)) the chain is on the cytoplasmic side. A helical membrane pass occupies residues 295–315 (QQLTGINVVMFYAPVLFKTIG). The Extracellular segment spans residues 316-320 (FGGTA). Residues 321–341 (SLMSAVITGLVNMFATFVSIA) traverse the membrane as a helical segment. The Cytoplasmic segment spans residues 342–347 (TVDRLG). Residues 348–368 (RRKLLLQGGVQMIFAQFILGT) traverse the membrane as a helical segment. The Extracellular segment spans residues 369-385 (LIAVKFGTAGVANISRG). The helical transmembrane segment at 386–406 (YAIVVVLCICVFVSAFAWSWG) threads the bilayer. Topologically, residues 407-425 (PLGWLVPSEIFPLEIRSAA) are cytoplasmic. Residues 426–446 (QSVVVVFNMAFTFIIAQIFLM) traverse the membrane as a helical segment. Residues 447 to 450 (MLCH) are Extracellular-facing. The helical transmembrane segment at 451–471 (LKFGLFYFFGAMELIMTGFVF) threads the bilayer. The Cytoplasmic portion of the chain corresponds to 472–512 (FFLPETKGIPIEEMDRIWGKHWYWRRFVGAGAGGKVEITST).

This sequence belongs to the major facilitator superfamily. Sugar transporter (TC 2.A.1.1) family. As to expression, expressed specifically in anthers.

It is found in the membrane. Mediates active uptake of hexoses by sugar:proton symport. May play an important role in transporting monosaccharides during anther development. The polypeptide is Sugar transport protein MST8 (Oryza sativa subsp. japonica (Rice)).